The following is a 387-amino-acid chain: Sedoheptulose-1,7-bisphosphatase, chloroplastic (387 aa).

A disulfide bridge connects residues cysteine 109 and cysteine 114. Mg(2+) is bound by residues aspartate 120, glutamate 149, aspartate 170, leucine 172, and aspartate 173. Substrate contacts are provided by residues 173-176 (DGSS), tyrosine 284, and lysine 314. Position 320 (glutamate 320) interacts with Mg(2+).

It belongs to the FBPase class 1 family. As to quaternary structure, homodimer. The cofactor is Mg(2+).

The protein resides in the plastid. It is found in the chloroplast. It carries out the reaction D-sedoheptulose 1,7-bisphosphate + H2O = D-sedoheptulose 7-phosphate + phosphate. Its pathway is carbohydrate biosynthesis; Calvin cycle. The polypeptide is Sedoheptulose-1,7-bisphosphatase, chloroplastic (Spinacia oleracea (Spinach)).